Consider the following 273-residue polypeptide: Large ribosomal subunit protein uL2 (273 aa).

Disordered stretches follow at residues 28 to 53 (KPFA…TTRH) and 221 to 273 (RGTA…RRSK). Positions 39–48 (KSGGRNNNGR) are enriched in low complexity.

This sequence belongs to the universal ribosomal protein uL2 family. Part of the 50S ribosomal subunit. Forms a bridge to the 30S subunit in the 70S ribosome.

Functionally, one of the primary rRNA binding proteins. Required for association of the 30S and 50S subunits to form the 70S ribosome, for tRNA binding and peptide bond formation. It has been suggested to have peptidyltransferase activity; this is somewhat controversial. Makes several contacts with the 16S rRNA in the 70S ribosome. This is Large ribosomal subunit protein uL2 from Enterobacter sp. (strain 638).